A 156-amino-acid polypeptide reads, in one-letter code: MKLTHVDEKGVKMVEVGHKKDMYRRAIAKGRIKLKPETIKLIREGKIEKGNVLAAAQIAGILAVKKTFDIIPLCHPIPLTGVDITFDFGEDYIEVTCEVRAIYKTGVEMEALTGVSVALLTIWDMVKAVEKDEKGQYPYTKIEEIRVVEKIKEERS.

Substrate is bound by residues 73–75 and 109–110; these read LCH and ME. Asp-124 is an active-site residue.

This sequence belongs to the MoaC family. In terms of assembly, homohexamer; trimer of dimers.

It catalyses the reaction (8S)-3',8-cyclo-7,8-dihydroguanosine 5'-triphosphate = cyclic pyranopterin phosphate + diphosphate. The protein operates within cofactor biosynthesis; molybdopterin biosynthesis. In terms of biological role, catalyzes the conversion of (8S)-3',8-cyclo-7,8-dihydroguanosine 5'-triphosphate to cyclic pyranopterin monophosphate (cPMP). The protein is Probable cyclic pyranopterin monophosphate synthase of Pyrococcus furiosus (strain ATCC 43587 / DSM 3638 / JCM 8422 / Vc1).